Consider the following 154-residue polypeptide: Flagellar assembly factor FliW (154 aa).

Belongs to the FliW family. As to quaternary structure, interacts with translational regulator CsrA and flagellin(s).

The protein resides in the cytoplasm. Acts as an anti-CsrA protein, binds CsrA and prevents it from repressing translation of its target genes, one of which is flagellin. Binds to flagellin and participates in the assembly of the flagellum. This chain is Flagellar assembly factor FliW, found in Carboxydothermus hydrogenoformans (strain ATCC BAA-161 / DSM 6008 / Z-2901).